Consider the following 662-residue polypeptide: Probable quinol oxidase subunit 1 (662 aa).

Helical transmembrane passes span 14–34 (WMITMAQIGAPFLVIGLIAVI) and 58–78 (LMYLICAVLMFVRGGIDALLL). Fe(II)-heme a is bound at residue H102. A run of 8 helical transmembrane segments spans residues 103 to 123 (GVIMIIFMAMPFVFGLWNVVV), 140 to 160 (ISFWLFFVGMILFNLSFIIGG), 187 to 207 (VAIQISGIGTLMTGINFFVTI), 228 to 248 (FITTLIVILAFPVFTVVLALM), 273 to 293 (FFWVWGHPEVYIVILPAFGIY), 311 to 331 (MVWATAGIAFLSFLVWVHHFF), 336 to 356 (GALINSFFSISTMLIGVPTGV), and 376 to 396 (MLFSLAFIPNFLLGGVTGVML). Cu cation is bound by residues H279, Y283, H328, and H329. The segment at residues 279–283 (HPEVY) is a cross-link (1'-histidyl-3'-tyrosine (His-Tyr)). H414 contacts heme a3. Helical transmembrane passes span 415 to 435 (FHYTLVTGVVFACLAGLIFWY), 451 to 471 (CFWLFMIGFNVCFLPQFILGL), 492 to 512 (VISTIGALLMAVGFLFLVVSI), 586 to 605 (THTGVIMGIFMLLGGFFLIF), and 609 to 628 (IPAAICLVGILGSLVYQSFV). H416 serves as a coordination point for Fe(II)-heme a.

It belongs to the heme-copper respiratory oxidase family. Cu cation serves as cofactor. Requires ferriheme a as cofactor. It depends on Heme A3. as a cofactor.

The protein resides in the cell membrane. It carries out the reaction 2 a quinol + O2 = 2 a quinone + 2 H2O. The protein operates within energy metabolism; oxidative phosphorylation. Its function is as follows. Catalyzes quinol oxidation with the concomitant reduction of oxygen to water. This is Probable quinol oxidase subunit 1 (qoxB) from Staphylococcus haemolyticus (strain JCSC1435).